A 339-amino-acid polypeptide reads, in one-letter code: ATPase GET3 (339 aa).

ATP is bound at residue 34-41; the sequence is KGGVGKTT. Asp-63 is an active-site residue. Residues Glu-244 and Asn-271 each contribute to the ATP site. Cys-282 and Cys-285 together coordinate Zn(2+).

The protein belongs to the arsA ATPase family. As to quaternary structure, homodimer.

Its subcellular location is the cytoplasm. It is found in the endoplasmic reticulum. ATPase required for the post-translational delivery of tail-anchored (TA) proteins to the endoplasmic reticulum. Recognizes and selectively binds the transmembrane domain of TA proteins in the cytosol. This complex then targets to the endoplasmic reticulum by membrane-bound receptors, where the tail-anchored protein is released for insertion. This process is regulated by ATP binding and hydrolysis. ATP binding drives the homodimer towards the closed dimer state, facilitating recognition of newly synthesized TA membrane proteins. ATP hydrolysis is required for insertion. Subsequently, the homodimer reverts towards the open dimer state, lowering its affinity for the membrane-bound receptor, and returning it to the cytosol to initiate a new round of targeting. The protein is ATPase GET3 of Podospora anserina (strain S / ATCC MYA-4624 / DSM 980 / FGSC 10383) (Pleurage anserina).